A 630-amino-acid polypeptide reads, in one-letter code: tRNA uridine 5-carboxymethylaminomethyl modification enzyme MnmG (630 aa).

Residue 13–18 participates in FAD binding; the sequence is GGGHAG. NAD(+) is bound at residue 273 to 287; sequence GPRYCPSIEDKIHRF.

It belongs to the MnmG family. Homodimer. Heterotetramer of two MnmE and two MnmG subunits. Requires FAD as cofactor.

Its subcellular location is the cytoplasm. Functionally, NAD-binding protein involved in the addition of a carboxymethylaminomethyl (cmnm) group at the wobble position (U34) of certain tRNAs, forming tRNA-cmnm(5)s(2)U34. The protein is tRNA uridine 5-carboxymethylaminomethyl modification enzyme MnmG of Pseudomonas putida (strain GB-1).